The primary structure comprises 292 residues: MEKLIEKANNLMEALPYIRRFAGKTFVIKYGGHAMSDEKLKESFALDVIMLRSLGINAVIVHGGGPQINQTLKRYGIVSQFVKGMRVTDSETMAVVEMVLVGQVNKEVVGYLNQHGGRAVGLSGKDGTLLLSKKLLQDVVGDDGTTEQVDMGYVGDVVKVNTDLLKALENGNYLPVIAPVGVGPQGESYNINADLVAGRVAAALNAEKLILLTDIEGVKDKAGQLLSSIAVADMHRLIREEAITGGMIPKVVCCADALEEGVKKAHIIDGRVEHAVLLEIFTDVGIGTEIQK.

Residues 64–65 (GG), arginine 86, and asparagine 190 contribute to the substrate site.

The protein belongs to the acetylglutamate kinase family. ArgB subfamily.

It localises to the cytoplasm. The catalysed reaction is N-acetyl-L-glutamate + ATP = N-acetyl-L-glutamyl 5-phosphate + ADP. It functions in the pathway amino-acid biosynthesis; L-arginine biosynthesis; N(2)-acetyl-L-ornithine from L-glutamate: step 2/4. Catalyzes the ATP-dependent phosphorylation of N-acetyl-L-glutamate. This Pelobacter propionicus (strain DSM 2379 / NBRC 103807 / OttBd1) protein is Acetylglutamate kinase.